The sequence spans 261 residues: Imidazole glycerol phosphate synthase subunit HisF (261 aa).

Catalysis depends on residues Asp-11 and Asp-130.

It belongs to the HisA/HisF family. Heterodimer of HisH and HisF.

Its subcellular location is the cytoplasm. The enzyme catalyses 5-[(5-phospho-1-deoxy-D-ribulos-1-ylimino)methylamino]-1-(5-phospho-beta-D-ribosyl)imidazole-4-carboxamide + L-glutamine = D-erythro-1-(imidazol-4-yl)glycerol 3-phosphate + 5-amino-1-(5-phospho-beta-D-ribosyl)imidazole-4-carboxamide + L-glutamate + H(+). It functions in the pathway amino-acid biosynthesis; L-histidine biosynthesis; L-histidine from 5-phospho-alpha-D-ribose 1-diphosphate: step 5/9. Functionally, IGPS catalyzes the conversion of PRFAR and glutamine to IGP, AICAR and glutamate. The HisF subunit catalyzes the cyclization activity that produces IGP and AICAR from PRFAR using the ammonia provided by the HisH subunit. This Jannaschia sp. (strain CCS1) protein is Imidazole glycerol phosphate synthase subunit HisF.